Reading from the N-terminus, the 381-residue chain is Succinyl-diaminopimelate desuccinylase (381 aa).

H68 is a Zn(2+) binding site. Residue D70 is part of the active site. D101 is a binding site for Zn(2+). The active-site Proton acceptor is E135. Zn(2+) is bound by residues E136, E164, and H350.

The protein belongs to the peptidase M20A family. DapE subfamily. In terms of assembly, homodimer. It depends on Zn(2+) as a cofactor. Requires Co(2+) as cofactor.

The enzyme catalyses N-succinyl-(2S,6S)-2,6-diaminopimelate + H2O = (2S,6S)-2,6-diaminopimelate + succinate. Its pathway is amino-acid biosynthesis; L-lysine biosynthesis via DAP pathway; LL-2,6-diaminopimelate from (S)-tetrahydrodipicolinate (succinylase route): step 3/3. Catalyzes the hydrolysis of N-succinyl-L,L-diaminopimelic acid (SDAP), forming succinate and LL-2,6-diaminopimelate (DAP), an intermediate involved in the bacterial biosynthesis of lysine and meso-diaminopimelic acid, an essential component of bacterial cell walls. This chain is Succinyl-diaminopimelate desuccinylase, found in Neisseria gonorrhoeae (strain NCCP11945).